The sequence spans 84 residues: Small ribosomal subunit protein bS18 (84 aa).

The protein belongs to the bacterial ribosomal protein bS18 family. In terms of assembly, part of the 30S ribosomal subunit. Forms a tight heterodimer with protein bS6.

In terms of biological role, binds as a heterodimer with protein bS6 to the central domain of the 16S rRNA, where it helps stabilize the platform of the 30S subunit. The polypeptide is Small ribosomal subunit protein bS18 (Mycobacterium leprae (strain Br4923)).